We begin with the raw amino-acid sequence, 205 residues long: N-(5'-phosphoribosyl)anthranilate isomerase (205 aa).

Belongs to the TrpF family.

The enzyme catalyses N-(5-phospho-beta-D-ribosyl)anthranilate = 1-(2-carboxyphenylamino)-1-deoxy-D-ribulose 5-phosphate. It functions in the pathway amino-acid biosynthesis; L-tryptophan biosynthesis; L-tryptophan from chorismate: step 3/5. The protein is N-(5'-phosphoribosyl)anthranilate isomerase of Thiobacillus denitrificans (strain ATCC 25259 / T1).